The primary structure comprises 152 residues: Actin-depolymerizing factor 2, isoform c (152 aa).

The 144-residue stretch at 4–147 (GVKVDPSCKN…DEKSVKSDLM (144 aa)) folds into the ADF-H domain.

It belongs to the actin-binding proteins ADF family.

Functionally, depolymerizes growing actin filaments in muscle cells; required for the assembly of actin filaments into the functional contractile myofilament lattice of muscle. This chain is Actin-depolymerizing factor 2, isoform c, found in Caenorhabditis elegans.